Consider the following 350-residue polypeptide: Alcohol dehydrogenase 1 (350 aa).

Cys-46, His-69, Cys-100, Cys-103, Cys-106, Cys-114, and Cys-156 together coordinate Zn(2+). NAD(+) contacts are provided by residues 180–186 (GAAGGLG), Asp-204, Lys-209, 271–273 (VGL), and Arg-343.

Belongs to the zinc-containing alcohol dehydrogenase family. As to quaternary structure, homotetramer. The cofactor is Zn(2+).

It localises to the cytoplasm. The catalysed reaction is a primary alcohol + NAD(+) = an aldehyde + NADH + H(+). The enzyme catalyses a secondary alcohol + NAD(+) = a ketone + NADH + H(+). In Kluyveromyces lactis (strain ATCC 8585 / CBS 2359 / DSM 70799 / NBRC 1267 / NRRL Y-1140 / WM37) (Yeast), this protein is Alcohol dehydrogenase 1 (ADH1).